Consider the following 569-residue polypeptide: Arginine--tRNA ligase (569 aa).

The 'HIGH' region signature appears at Pro-123–His-133.

It belongs to the class-I aminoacyl-tRNA synthetase family. As to quaternary structure, monomer.

Its subcellular location is the cytoplasm. It carries out the reaction tRNA(Arg) + L-arginine + ATP = L-arginyl-tRNA(Arg) + AMP + diphosphate. This is Arginine--tRNA ligase from Fusobacterium nucleatum subsp. nucleatum (strain ATCC 25586 / DSM 15643 / BCRC 10681 / CIP 101130 / JCM 8532 / KCTC 2640 / LMG 13131 / VPI 4355).